A 337-amino-acid polypeptide reads, in one-letter code: Putative [LysW]-lysine/[LysW]-ornithine hydrolase (337 aa).

His67 serves as a coordination point for Zn(2+). The active site involves Asp69. Asp91 contacts Zn(2+). Glu118 functions as the Proton acceptor in the catalytic mechanism. Residues Glu119, Glu140, and His298 each contribute to the Zn(2+) site.

This sequence belongs to the peptidase M20A family. LysK subfamily. Requires Zn(2+) as cofactor. The cofactor is Co(2+).

The protein localises to the cytoplasm. The catalysed reaction is [amino-group carrier protein]-C-terminal-gamma-(L-lysyl)-L-glutamate + H2O = [amino-group carrier protein]-C-terminal-L-glutamate + L-lysine. It carries out the reaction [amino-group carrier protein]-C-terminal-gamma-(L-ornithyl)-L-glutamate + H2O = [amino-group carrier protein]-C-terminal-L-glutamate + L-ornithine. It participates in amino-acid biosynthesis; L-lysine biosynthesis via AAA pathway; L-lysine from L-alpha-aminoadipate (Thermus route): step 5/5. The protein operates within amino-acid biosynthesis; L-arginine biosynthesis. Catalyzes the release of L-lysine from [LysW]-gamma-L-lysine and the release of L-ornithine from [LysW]-L-ornithine. This is Putative [LysW]-lysine/[LysW]-ornithine hydrolase from Pyrococcus abyssi (strain GE5 / Orsay).